Here is a 423-residue protein sequence, read N- to C-terminus: GTPase Obg (423 aa).

The Obg domain occupies 1-158 (MFYDEAKIYV…RWLVLELKLL (158 aa)). The region spanning 159–328 (ADVGLIGLPN…LLYHVSGLLA (170 aa)) is the OBG-type G domain. GTP-binding positions include 165–172 (GLPNAGKS), 190–194 (FTTLT), 212–215 (DIPG), 281–284 (NKMD), and 309–311 (SAA). Positions 172 and 192 each coordinate Mg(2+). In terms of domain architecture, OCT spans 336-421 (VTAPEEEKVT…IGKFEFEYVE (86 aa)).

Belongs to the TRAFAC class OBG-HflX-like GTPase superfamily. OBG GTPase family. As to quaternary structure, monomer. The cofactor is Mg(2+).

It localises to the cytoplasm. An essential GTPase which binds GTP, GDP and possibly (p)ppGpp with moderate affinity, with high nucleotide exchange rates and a fairly low GTP hydrolysis rate. Plays a role in control of the cell cycle, stress response, ribosome biogenesis and in those bacteria that undergo differentiation, in morphogenesis control. The sequence is that of GTPase Obg from Moorella thermoacetica (strain ATCC 39073 / JCM 9320).